The sequence spans 375 residues: Transcription factor E2F4 (375 aa).

Residues 12-81 (SRHEKSLGLL…KNSIQWKGVG (70 aa)) mediate DNA binding. Positions 39–61 (LKAAADTLAVRQKRRIYDITNVL) are leucine-zipper. A DEF box motif is present at residues 44–81 (DTLAVRQKRRIYDITNVLEGIGLIEKKSKNSIQWKGVG). Residues 82-177 (PGCNTREIAD…NTNGQKKFQI (96 aa)) form a dimerization region. Residues 197 to 300 (SSAPVVVPVP…PDPSTSFQPI (104 aa)) are disordered. The segment covering 220-270 (STPQRPALTPQNDIATSPAPTVPHSTISNAESQDCPTGQTFSMENTTSSRL) has biased composition (polar residues). Residues 280–296 (SSASLDNSNDSPDPSTS) show a composition bias toward low complexity. The interval 299–375 (PIKSDLSDVL…CDLFDVPINL (77 aa)) is transactivation.

It belongs to the E2F/DP family. As to quaternary structure, component of the drtf1/e2f transcription factor complex. Component of the EDM complex, at least composed of e2f4, e2f5, mcidas and tfdp1.

Its subcellular location is the nucleus. Transcription activator that binds DNA cooperatively with DP proteins through the E2 recognition site, 5'-TTTC[CG]CGC-3' found in the promoter region of a number of genes. Component of the EDM complex, a complex specifically required for multiciliate cell differentiation: the EDM complex binds and activate genes required for centriole biogenesis. Activates genes required for centriole assembly (plk4, cep152) and genes specifically required for motile cilia formation (foxj1). Also promotes the deuterosome pathway of centriole biogenesis by activating expression of deup1, but not its paralog cep63. This is Transcription factor E2F4 from Xenopus laevis (African clawed frog).